Consider the following 927-residue polypeptide: UPF0182 protein bll7333 (927 aa).

The next 7 membrane-spanning stretches (helical) occupy residues 17–37 (AVVGLIIAALVIAIVLTLLAL), 65–85 (AVVFLAVWTATAVILLLNGWL), 134–154 (LALLVAAAEAGNWGVFLQFVY), 185–205 (WMMLALALSALFAAAIYLVHG), 220–240 (VIAHGSALLGLLFAVKAWSFG), 264–284 (VGLPALWLMIGLSGIAALAAW), and 297–317 (AAFLLVAIGSFVLSGLVPVLF).

Belongs to the UPF0182 family.

It localises to the cell membrane. In Bradyrhizobium diazoefficiens (strain JCM 10833 / BCRC 13528 / IAM 13628 / NBRC 14792 / USDA 110), this protein is UPF0182 protein bll7333.